A 152-amino-acid polypeptide reads, in one-letter code: Ribosome maturation factor RimP (152 aa).

This sequence belongs to the RimP family.

Its subcellular location is the cytoplasm. Required for maturation of 30S ribosomal subunits. This is Ribosome maturation factor RimP from Paraburkholderia xenovorans (strain LB400).